The sequence spans 185 residues: Ribosome-recycling factor (185 aa).

Belongs to the RRF family.

Its subcellular location is the cytoplasm. In terms of biological role, responsible for the release of ribosomes from messenger RNA at the termination of protein biosynthesis. May increase the efficiency of translation by recycling ribosomes from one round of translation to another. The protein is Ribosome-recycling factor of Campylobacter jejuni (strain RM1221).